The primary structure comprises 290 residues: uncharacterized protein (290 aa).

It belongs to the UreD family.

It localises to the cytoplasm. The protein resides in the nucleus. Probably facilitates nickel incorporation. This is an uncharacterized protein from Schizosaccharomyces pombe (strain 972 / ATCC 24843) (Fission yeast).